The sequence spans 579 residues: 2-isopropylmalate synthase (579 aa).

A Pyruvate carboxyltransferase domain is found at 40 to 314 (PRWCAVDLRD…DPMIDFSDID (275 aa)). Mg(2+)-binding residues include Asp-49, His-253, His-255, and Asn-289. Positions 456-579 (SGKADGQWGR…VNRAIRDAQS (124 aa)) are regulatory domain.

It belongs to the alpha-IPM synthase/homocitrate synthase family. LeuA type 2 subfamily. In terms of assembly, homodimer. It depends on Mg(2+) as a cofactor.

It localises to the cytoplasm. It carries out the reaction 3-methyl-2-oxobutanoate + acetyl-CoA + H2O = (2S)-2-isopropylmalate + CoA + H(+). The protein operates within amino-acid biosynthesis; L-leucine biosynthesis; L-leucine from 3-methyl-2-oxobutanoate: step 1/4. Its function is as follows. Catalyzes the condensation of the acetyl group of acetyl-CoA with 3-methyl-2-oxobutanoate (2-ketoisovalerate) to form 3-carboxy-3-hydroxy-4-methylpentanoate (2-isopropylmalate). This Pseudarthrobacter chlorophenolicus (strain ATCC 700700 / DSM 12829 / CIP 107037 / JCM 12360 / KCTC 9906 / NCIMB 13794 / A6) (Arthrobacter chlorophenolicus) protein is 2-isopropylmalate synthase.